We begin with the raw amino-acid sequence, 1598 residues long: Transposon Ty2-LR2 Gag-Pol polyprotein (1598 aa).

Polar residues-rich tracts occupy residues 1–11 (MESQQLHQNPH), 19–39 (ASVTSKEVPSNQDPLAVSASN), and 49–60 (KVNSQEETTPGT). 2 disordered regions span residues 1–88 (MESQ…YQQH) and 359–449 (QHSE…SNDE). Residues 295-397 (ENNINVSDRL…SSKPRAAKAH (103 aa)) are RNA-binding. The segment covering 369-381 (TSPNTTNTKVTTR) has biased composition (low complexity). Polar residues-rich tracts occupy residues 399-408 (IATSSKFSRV) and 415-435 (ESTVSSQYLSDDNELSLGQQQ). Aspartate 457 serves as the catalytic For protease activity; shared with dimeric partner. The segment at 579–636 (NVNKSKSVNKYPYPLIHRMLGHANFRSIQKSLKKNAVTYLKESDIEWSNASTYQCPDC) is integrase-type zinc finger-like. Residues 656-831 (ESYEPFQYLH…AGLDITTILP (176 aa)) form the Integrase catalytic domain. Mg(2+) contacts are provided by aspartate 667 and aspartate 732. 3 stretches are compositionally biased toward polar residues: residues 915–927 (SFIEQNETEQSYD), 1009–1034 (ESDTTSPRHSSTFTARNQNRPGSTNE), and 1065–1082 (QRNSDTNIKYRTTNSTPS). Disordered regions lie at residues 915 to 934 (SFIEQNETEQSYDQNKESDH), 1004 to 1034 (MGGTVESDTTSPRHSSTFTARNQNRPGSTNE), 1059 to 1135 (TEEP…KSSK), 1146 to 1165 (LPLPDLTHKSPTDTSDVSKD), and 1170 to 1205 (HSRQTNSSLGGMDDSNVLTTTKSKKRSLEDNETEIE). The span at 1151–1165 (LTHKSPTDTSDVSKD) shows a compositional bias: basic and acidic residues. Residues 1193–1227 (KKRSLEDNETEIEVSRDTWNNKNMRSLEPPRSKKR) carry the Bipartite nuclear localization signal motif. A Reverse transcriptase Ty1/copia-type domain is found at 1353–1491 (NDYYITQLDI…DILGLEIKYQ (139 aa)). Mg(2+)-binding residues include aspartate 1361, aspartate 1442, and aspartate 1443.

As to quaternary structure, the capsid protein forms a homotrimer, from which the VLPs are assembled. The protease is a homodimer, whose active site consists of two apposed aspartic acid residues. Post-translationally, initially, virus-like particles (VLPs) are composed of the structural unprocessed proteins Gag and Gag-Pol, and also contain the host initiator methionine tRNA (tRNA(i)-Met) which serves as a primer for minus-strand DNA synthesis, and a dimer of genomic Ty RNA. Processing of the polyproteins occurs within the particle and proceeds by an ordered pathway, called maturation. First, the protease (PR) is released by autocatalytic cleavage of the Gag-Pol polyprotein, and this cleavage is a prerequisite for subsequent processing at the remaining sites to release the mature structural and catalytic proteins. Maturation takes place prior to the RT reaction and is required to produce transposition-competent VLPs.

It localises to the cytoplasm. It is found in the nucleus. It catalyses the reaction DNA(n) + a 2'-deoxyribonucleoside 5'-triphosphate = DNA(n+1) + diphosphate. It carries out the reaction Endonucleolytic cleavage to 5'-phosphomonoester.. In terms of biological role, capsid protein (CA) is the structural component of the virus-like particle (VLP), forming the shell that encapsulates the retrotransposons dimeric RNA genome. The particles are assembled from trimer-clustered units and there are holes in the capsid shells that allow for the diffusion of macromolecules. CA also has nucleocapsid-like chaperone activity, promoting primer tRNA(i)-Met annealing to the multipartite primer-binding site (PBS), dimerization of Ty2 RNA and initiation of reverse transcription. Its function is as follows. The aspartyl protease (PR) mediates the proteolytic cleavages of the Gag and Gag-Pol polyproteins after assembly of the VLP. Reverse transcriptase/ribonuclease H (RT) is a multifunctional enzyme that catalyzes the conversion of the retro-elements RNA genome into dsDNA within the VLP. The enzyme displays a DNA polymerase activity that can copy either DNA or RNA templates, and a ribonuclease H (RNase H) activity that cleaves the RNA strand of RNA-DNA heteroduplexes during plus-strand synthesis and hydrolyzes RNA primers. The conversion leads to a linear dsDNA copy of the retrotransposon that includes long terminal repeats (LTRs) at both ends. Functionally, integrase (IN) targets the VLP to the nucleus, where a subparticle preintegration complex (PIC) containing at least integrase and the newly synthesized dsDNA copy of the retrotransposon must transit the nuclear membrane. Once in the nucleus, integrase performs the integration of the dsDNA into the host genome. This Saccharomyces cerevisiae (strain ATCC 204508 / S288c) (Baker's yeast) protein is Transposon Ty2-LR2 Gag-Pol polyprotein (TY2B-LR2).